A 443-amino-acid polypeptide reads, in one-letter code: Thymidine phosphorylase (443 aa).

Belongs to the thymidine/pyrimidine-nucleoside phosphorylase family. In terms of assembly, homodimer.

It carries out the reaction thymidine + phosphate = 2-deoxy-alpha-D-ribose 1-phosphate + thymine. The protein operates within pyrimidine metabolism; dTMP biosynthesis via salvage pathway; dTMP from thymine: step 1/2. Its function is as follows. The enzymes which catalyze the reversible phosphorolysis of pyrimidine nucleosides are involved in the degradation of these compounds and in their utilization as carbon and energy sources, or in the rescue of pyrimidine bases for nucleotide synthesis. The protein is Thymidine phosphorylase of Shewanella baltica (strain OS195).